Reading from the N-terminus, the 540-residue chain is FAD-binding monooxygenase lolF2 (540 aa).

FAD contacts are provided by residues 43–46 (VWRE) and 55–58 (DSLF). NADP(+)-binding positions include 53–55 (AVD), 182–188 (TGPSGVQ), and 205–206 (QS).

It belongs to the FAD-binding monooxygenase family. The cofactor is FAD.

It functions in the pathway alkaloid biosynthesis. Functionally, FAD-binding monooxygenase; part of the gene cluster that mediates the biosynthesis of loline alkaloids, potent insecticidal agents composed of a pyrrolizidine ring system and an uncommon ether bridge linking carbons 2 and 7. Lolines are structurally differentiated by the various modifications of the L-amino group and include norloline, loline, N-methylloline, N-acetylloline, N-acetylnorloline, and N-formylloline. The first committed step is the condensation of O-acetyl-L-homoserine (derived from L-aspartic acid) and L-proline, probably catalyzed by the gamma-type pyridoxal 5'-phosphate(PLP)-dependent enzyme lolC, to give the diamino diacid, NACPP. Ensuing cyclization, decarboxylation, and acetylation steps yield 1-exo-acetamidopyrrolizidine (AcAP). LolO is required for installation of the ether bridge upon the pathway intermediate, 1-exo-acetamidopyrrolizidine (AcAP). In sequential 2-oxoglutarate- and O(2)-consuming steps, lolO removes hydrogens from C2 and C7 of AcAP to form both carbon-oxygen bonds in N-acetylnorloline (NANL), the precursor to all other lolines. The enzymes lolD, lolE, lolF and lolT have also been proposed to be involved in the ether-bridge installation. Further processing of the exocyclic moiety of NANL by fungal N-acetamidase (LolN), methyltransferase (LolM), and cytochrome P450 (LolP) enzymes, with occasional involvement of a plant acetyltransferase, generates the other known lolines. LolN transforms NANL to norlonine which is monomethylated and dimethylated to respectively lonine and N-methyllonine (NML) by lolM. LolP catalyzes hydroxylation of the methyl group in N-methylloline (NML) and further oxygenation to N-formylloline (NFL). A plant acetyltransferase is responsible for the acetylation of loline to form N-acetylloline (NAL). LolA might interact with aspartate kinase to prevent feedback inhibition of its activity by these end products and thereby promote production of l-homoserine from l-aspartate. In Epichloe uncinata (Endophyte fungus), this protein is FAD-binding monooxygenase lolF2.